Consider the following 623-residue polypeptide: Phosphomethylpyrimidine synthase (623 aa).

Substrate is bound by residues Asn221, Met250, Tyr279, His315, Ser335–Gly337, Asp376–Arg379, and Glu415. His419 is a binding site for Zn(2+). Residue Tyr442 participates in substrate binding. His483 is a binding site for Zn(2+). Cys563, Cys566, and Cys571 together coordinate [4Fe-4S] cluster.

This sequence belongs to the ThiC family. In terms of assembly, homodimer. [4Fe-4S] cluster serves as cofactor.

The enzyme catalyses 5-amino-1-(5-phospho-beta-D-ribosyl)imidazole + S-adenosyl-L-methionine = 4-amino-2-methyl-5-(phosphooxymethyl)pyrimidine + CO + 5'-deoxyadenosine + formate + L-methionine + 3 H(+). It participates in cofactor biosynthesis; thiamine diphosphate biosynthesis. In terms of biological role, catalyzes the synthesis of the hydroxymethylpyrimidine phosphate (HMP-P) moiety of thiamine from aminoimidazole ribotide (AIR) in a radical S-adenosyl-L-methionine (SAM)-dependent reaction. The sequence is that of Phosphomethylpyrimidine synthase from Parvibaculum lavamentivorans (strain DS-1 / DSM 13023 / NCIMB 13966).